The sequence spans 1240 residues: DNA-directed RNA polymerase subunit beta (1240 aa).

The protein belongs to the RNA polymerase beta chain family. The RNAP catalytic core consists of 2 alpha, 1 beta, 1 beta' and 1 omega subunit. When a sigma factor is associated with the core the holoenzyme is formed, which can initiate transcription.

It catalyses the reaction RNA(n) + a ribonucleoside 5'-triphosphate = RNA(n+1) + diphosphate. Functionally, DNA-dependent RNA polymerase catalyzes the transcription of DNA into RNA using the four ribonucleoside triphosphates as substrates. This is DNA-directed RNA polymerase subunit beta from Phytoplasma australiense.